The following is a 55-amino-acid chain: Large ribosomal subunit protein bL33 (55 aa).

Belongs to the bacterial ribosomal protein bL33 family.

The chain is Large ribosomal subunit protein bL33 from Micrococcus luteus (strain ATCC 4698 / DSM 20030 / JCM 1464 / CCM 169 / CCUG 5858 / IAM 1056 / NBRC 3333 / NCIMB 9278 / NCTC 2665 / VKM Ac-2230) (Micrococcus lysodeikticus).